Here is a 201-residue protein sequence, read N- to C-terminus: MAKLLYIKANPKSNQSSRTFIISEHFIKVYKEFHPNDQIITLDLYKEGIHFLSQEDINDIFAPKTEASKHHHILKYAYQFAEADKYVFAAPMWNLGIPAILKAYIDYITVSGITFKYTEQGAVGLLRGKKAVHIMATGGEYKTLPFSDFEMANRYLKTILGFMGVEDFKTITAQRLDIVGEDVEKIMFTALKEAEEIAKGF.

Residue methionine 92–leucine 95 participates in FMN binding.

This sequence belongs to the azoreductase type 1 family. Homodimer. The cofactor is FMN.

The catalysed reaction is 2 a quinone + NADH + H(+) = 2 a 1,4-benzosemiquinone + NAD(+). The enzyme catalyses N,N-dimethyl-1,4-phenylenediamine + anthranilate + 2 NAD(+) = 2-(4-dimethylaminophenyl)diazenylbenzoate + 2 NADH + 2 H(+). Quinone reductase that provides resistance to thiol-specific stress caused by electrophilic quinones. Its function is as follows. Also exhibits azoreductase activity. Catalyzes the reductive cleavage of the azo bond in aromatic azo compounds to the corresponding amines. The protein is FMN-dependent NADH:quinone oxidoreductase of Caldicellulosiruptor bescii (strain ATCC BAA-1888 / DSM 6725 / KCTC 15123 / Z-1320) (Anaerocellum thermophilum).